The following is a 208-amino-acid chain: ATP-dependent Clp protease proteolytic subunit (208 aa).

The active-site Nucleophile is serine 112. Histidine 137 is a catalytic residue.

Belongs to the peptidase S14 family. As to quaternary structure, fourteen ClpP subunits assemble into 2 heptameric rings which stack back to back to give a disk-like structure with a central cavity, resembling the structure of eukaryotic proteasomes.

It localises to the cytoplasm. The catalysed reaction is Hydrolysis of proteins to small peptides in the presence of ATP and magnesium. alpha-casein is the usual test substrate. In the absence of ATP, only oligopeptides shorter than five residues are hydrolyzed (such as succinyl-Leu-Tyr-|-NHMec, and Leu-Tyr-Leu-|-Tyr-Trp, in which cleavage of the -Tyr-|-Leu- and -Tyr-|-Trp bonds also occurs).. In terms of biological role, cleaves peptides in various proteins in a process that requires ATP hydrolysis. Has a chymotrypsin-like activity. Plays a major role in the degradation of misfolded proteins. This is ATP-dependent Clp protease proteolytic subunit from Buchnera aphidicola subsp. Acyrthosiphon pisum (strain APS) (Acyrthosiphon pisum symbiotic bacterium).